The chain runs to 505 residues: Apolipoprotein N-acyltransferase (505 aa).

6 helical membrane-spanning segments follow: residues 15-46 (AAFV…LLLL), 55-75 (ALIA…WVHV), 89-109 (LFLM…FGWL), 129-149 (LWLI…WLWL), 161-181 (FAPI…AGSL), and 192-212 (MACI…MQWV). Residues 225 to 471 (IQGNIEQGLK…TGVLKATVTP (247 aa)) enclose the CN hydrolase domain. Catalysis depends on Glu-264, which acts as the Proton acceptor. Residue Lys-330 is part of the active site. Cys-382 serves as the catalytic Nucleophile. Residues 479–499 (FLWGTTPLYLWVGLAAGFAFW) form a helical membrane-spanning segment.

The protein belongs to the CN hydrolase family. Apolipoprotein N-acyltransferase subfamily.

Its subcellular location is the cell inner membrane. It carries out the reaction N-terminal S-1,2-diacyl-sn-glyceryl-L-cysteinyl-[lipoprotein] + a glycerophospholipid = N-acyl-S-1,2-diacyl-sn-glyceryl-L-cysteinyl-[lipoprotein] + a 2-acyl-sn-glycero-3-phospholipid + H(+). It functions in the pathway protein modification; lipoprotein biosynthesis (N-acyl transfer). Catalyzes the phospholipid dependent N-acylation of the N-terminal cysteine of apolipoprotein, the last step in lipoprotein maturation. This chain is Apolipoprotein N-acyltransferase, found in Vibrio cholerae serotype O1 (strain ATCC 39315 / El Tor Inaba N16961).